The following is a 119-amino-acid chain: Large ribosomal subunit protein bL20 (119 aa).

The protein belongs to the bacterial ribosomal protein bL20 family.

Binds directly to 23S ribosomal RNA and is necessary for the in vitro assembly process of the 50S ribosomal subunit. It is not involved in the protein synthesizing functions of that subunit. The protein is Large ribosomal subunit protein bL20 of Thermoanaerobacter pseudethanolicus (strain ATCC 33223 / 39E) (Clostridium thermohydrosulfuricum).